The primary structure comprises 570 residues: Spastin (570 aa).

Residues 1–35 (MNSGHKARLRGGRACGPVSDGSARGNRLLFYTRSL) lie on the Cytoplasmic side of the membrane. Positions 36 to 52 (SRVPEWLLRVLLLLLRW) form an intramembrane region, helical. The Cytoplasmic portion of the chain corresponds to 53–570 (LFQPIRRAMA…NREYGDTTGV (518 aa)). Residues 83–158 (YHKQAFEFIS…SMAEDRLKLL (76 aa)) enclose the MIT domain. Residues 186–269 (APASGAVSKK…SPQRKRDMKN (84 aa)) are disordered. Composition is skewed to polar residues over residues 199 to 208 (LTITNQTSLR), 216 to 242 (TPNASGLNCTPSAAQSSRTGPQNNQKG), and 251 to 261 (VKASTTATASP). 335 to 342 (GPPGNGKT) contacts ATP.

Belongs to the AAA ATPase family. Spastin subfamily. In terms of assembly, homohexamer. The homohexamer is stabilized by ATP-binding. The homohexamer may adopt a ring conformation through which microtubules pass prior to being severed. Interacts with microtubules.

Its subcellular location is the membrane. It localises to the cytoplasm. The protein resides in the cytoskeleton. It is found in the microtubule organizing center. The protein localises to the centrosome. Its subcellular location is the perinuclear region. It localises to the nucleus. It catalyses the reaction n ATP + n H2O + a microtubule = n ADP + n phosphate + (n+1) alpha/beta tubulin heterodimers.. ATP-dependent microtubule severing protein that specifically recognizes and cuts microtubules that are polyglutamylated. Preferentially recognizes and acts on microtubules decorated with short polyglutamate tails: severing activity increases as the number of glutamates per tubulin rises from one to eight, but decreases beyond this glutamylation threshold. Microtubule severing promotes reorganization of cellular microtubule arrays and the release of microtubules from the centrosome following nucleation. Required for membrane traffic from the endoplasmic reticulum (ER) to the Golgi and for completion of the abscission stage of cytokinesis. Also plays a role in axon growth and the formation of axonal branches. The sequence is that of Spastin from Danio rerio (Zebrafish).